A 605-amino-acid chain; its full sequence is Bifunctional purine biosynthesis protein ADE16 (605 aa).

The MGS-like domain maps to 1-147 (MSSEAPIALL…KNHGRVSIIS (147 aa)). IMP-binding positions include 35 to 38 (SGGT), 65 to 68 (RVKT), 102 to 103 (CN), and 126 to 127 (DI). Lys-138 acts as the Proton donor/acceptor; for FAICAR cyclization activity in catalysis. 5-amino-1-(5-phospho-beta-D-ribosyl)imidazole-4-carboxamide is bound by residues 219–220 (RY), His-279, Gly-327, Asp-350, Asn-442, and Arg-462. Residue His-279 is the Proton acceptor; for AICAR formyltransferase activity of the active site. Position 463 (Ile-463) interacts with (6R)-10-formyltetrahydrofolate. 5-amino-1-(5-phospho-beta-D-ribosyl)imidazole-4-carboxamide is bound at residue Phe-554. A (6R)-10-formyltetrahydrofolate-binding site is contributed by Asp-559. Residue Arg-601 coordinates 5-amino-1-(5-phospho-beta-D-ribosyl)imidazole-4-carboxamide.

The protein belongs to the PurH family. As to quaternary structure, homodimer.

The protein resides in the cytoplasm. The protein localises to the cytosol. The enzyme catalyses (6R)-10-formyltetrahydrofolate + 5-amino-1-(5-phospho-beta-D-ribosyl)imidazole-4-carboxamide = 5-formamido-1-(5-phospho-D-ribosyl)imidazole-4-carboxamide + (6S)-5,6,7,8-tetrahydrofolate. It catalyses the reaction IMP + H2O = 5-formamido-1-(5-phospho-D-ribosyl)imidazole-4-carboxamide. It participates in purine metabolism; IMP biosynthesis via de novo pathway; 5-formamido-1-(5-phospho-D-ribosyl)imidazole-4-carboxamide from 5-amino-1-(5-phospho-D-ribosyl)imidazole-4-carboxamide (10-formyl THF route): step 1/1. The protein operates within purine metabolism; IMP biosynthesis via de novo pathway; IMP from 5-formamido-1-(5-phospho-D-ribosyl)imidazole-4-carboxamide: step 1/1. In terms of biological role, bifunctional enzyme that catalyzes the last two steps of purine biosynthesis. Acts as a transformylase that incorporates a formyl group to the AMP analog AICAR (5-amino-1-(5-phospho-beta-D-ribosyl)imidazole-4-carboxamide) to produce the intermediate formyl-AICAR (FAICAR). Also catalyzes the cyclization of FAICAR to IMP. This Cryptococcus neoformans var. grubii serotype A (strain H99 / ATCC 208821 / CBS 10515 / FGSC 9487) (Filobasidiella neoformans var. grubii) protein is Bifunctional purine biosynthesis protein ADE16.